A 238-amino-acid chain; its full sequence is Purine nucleoside phosphorylase DeoD-type (238 aa).

Residue H4 participates in a purine D-ribonucleoside binding. Phosphate-binding positions include G20, R24, R43, and 87-90 (RVGS). A purine D-ribonucleoside is bound by residues 179-181 (EME) and 203-204 (SD). D204 functions as the Proton donor in the catalytic mechanism.

It belongs to the PNP/UDP phosphorylase family. Homohexamer; trimer of homodimers.

The enzyme catalyses a purine D-ribonucleoside + phosphate = a purine nucleobase + alpha-D-ribose 1-phosphate. The catalysed reaction is a purine 2'-deoxy-D-ribonucleoside + phosphate = a purine nucleobase + 2-deoxy-alpha-D-ribose 1-phosphate. In terms of biological role, catalyzes the reversible phosphorolytic breakdown of the N-glycosidic bond in the beta-(deoxy)ribonucleoside molecules, with the formation of the corresponding free purine bases and pentose-1-phosphate. This Pasteurella multocida (strain Pm70) protein is Purine nucleoside phosphorylase DeoD-type.